Reading from the N-terminus, the 823-residue chain is Zygotic DNA replication licensing factor mcm6 (823 aa).

Residues 159–186 (CLDCQTLVRDVEQQFKYTQPSICRNPVC) form a C4-type zinc finger. In terms of domain architecture, MCM spans 347–554 (LYHNLCTSLF…TDYAIARRIV (208 aa)). 397–404 (GDPSTAKS) contacts ATP. Residues 529-532 (SRFD) carry the Arginine finger motif. The tract at residues 666 to 713 (NLDQEDEHEAEEEPQEVINGDASVPSGVNGHVNGMNGHAEEPNAATPK) is disordered. The span at 667 to 680 (LDQEDEHEAEEEPQ) shows a compositional bias: acidic residues. Low complexity predominate over residues 692–702 (GVNGHVNGMNG).

Belongs to the MCM family. As to quaternary structure, component of the mcm2-7 complex (RLF-M). The complex forms a toroidal hexameric ring with the proposed subunit order mcm2-mcm6-mcm4-mcm7-mcm3-mcm5. Begins to associate with zmcm3, mcm4 and mcm7 into mcm complexes at the neurula stage.

It is found in the nucleus. The enzyme catalyses ATP + H2O = ADP + phosphate + H(+). Its function is as follows. Acts as a component of the mcm2-7 complex (mcm complex) which is the putative replicative helicase essential for 'once per cell cycle' DNA replication initiation and elongation in eukaryotic cells. The active ATPase sites in the mcm2-7 ring are formed through the interaction surfaces of two neighboring subunits such that a critical structure of a conserved arginine finger motif is provided in trans relative to the ATP-binding site of the Walker A box of the adjacent subunit. The six ATPase active sites, however, are likely to contribute differentially to the complex helicase activity. The existence of maternal and zygotic forms of mcm3 and mcm6 suggests that specific forms of mcm2-7 complexes may be used during different stages of development. May replace mmcm6 in the mcm2-7 complex. The chain is Zygotic DNA replication licensing factor mcm6 from Xenopus tropicalis (Western clawed frog).